A 261-amino-acid polypeptide reads, in one-letter code: Probable membrane transporter protein PD_1894 (261 aa).

The next 8 membrane-spanning stretches (helical) occupy residues leucine 6–glycine 26, histidine 45–isoleucine 64, valine 78–isoleucine 98, aspartate 99–leucine 119, alanine 150–alanine 170, threonine 175–leucine 195, tryptophan 205–leucine 225, and valine 239–leucine 259.

The protein belongs to the 4-toluene sulfonate uptake permease (TSUP) (TC 2.A.102) family.

It localises to the cell membrane. This is Probable membrane transporter protein PD_1894 from Xylella fastidiosa (strain Temecula1 / ATCC 700964).